An 876-amino-acid chain; its full sequence is MNSTVAPASVADIRKIFLDFFASKGHTVVPSSPLVPGNDPTLMFTNSGMVQFKDVFLGTDKRSYVRAASVQACLRAGGKHNDLENVGYTARHHTFFEMLGNWSFGDYFKRDSLKWGWELLTKVYKLPADKLWATVYIDDDEAYNIWTQEIGLPPERVVRIGDNKGAKYASDNFWMMADTGPCGPCSEIFYDHGPAIAGGPPGSPEQDGDRYIEIWNHVFMQYDMQPDGSVKPLPAPCVDTGMGLERLAAILQHVHSNYEIDIFDALIKAAARETGCTDLGNKSLRVIADHIRATAFLVSDGVLPSNEGRGYVQRRIIRRAIRHGYKLGQKAPFFYKLVPDLVTLMGEAYPGLATQAERIAQVLQAEEERFFETLANGMQILDETLTGDAKVLPGDVAFKLHDTFGFPLDLSADVCRERGVEVDEAGFHAAMEKQKAQGRAAGKFRMDRALEYSGDGNDFVGYERLTEVTKIVALYADSTPVSELKAGQAGVVVLAATPFYGESGGQVGDQGAIFSDGAMFDVADTQKIKADVFGHHGVLKSGALKIGDVVTAHVNASLRAATQRNHSATHLMHKALREVLGAHVQQKGSLVNAERTRFDFAHNAPVTDEQIREVEARVNSEILSNAATQSRVMDIDAAQETGAMMLFGEKYGESVRVLDIGASRELCGGTHVARTGDIGLFKVVAESGVASGVRRIEAVTGQNALSYLQDLEDTVTQVAGTLKAPVVEINERVAGVLDHLKSLEKEIAALKGKLASAQGDELVTQAVDVKGIKVLVAMLEGADTKTLRDTMDKLKDKLKSAVIVLAAVEGDKVQIAAGVTSNSVGKVKAGELVNFVASQVGGKGGGKPDMAMAGGTEPAKLPAALASVMAWVSAKL.

Positions 566, 570, 667, and 671 each coordinate Zn(2+).

It belongs to the class-II aminoacyl-tRNA synthetase family. Zn(2+) is required as a cofactor.

It is found in the cytoplasm. It catalyses the reaction tRNA(Ala) + L-alanine + ATP = L-alanyl-tRNA(Ala) + AMP + diphosphate. Functionally, catalyzes the attachment of alanine to tRNA(Ala) in a two-step reaction: alanine is first activated by ATP to form Ala-AMP and then transferred to the acceptor end of tRNA(Ala). Also edits incorrectly charged Ser-tRNA(Ala) and Gly-tRNA(Ala) via its editing domain. The protein is Alanine--tRNA ligase of Albidiferax ferrireducens (strain ATCC BAA-621 / DSM 15236 / T118) (Rhodoferax ferrireducens).